An 88-amino-acid polypeptide reads, in one-letter code: Putative membrane protein insertion efficiency factor (88 aa).

The protein belongs to the UPF0161 family.

It localises to the cell inner membrane. In terms of biological role, could be involved in insertion of integral membrane proteins into the membrane. In Prochlorococcus marinus (strain MIT 9313), this protein is Putative membrane protein insertion efficiency factor.